The primary structure comprises 206 residues: Glutathione peroxidase 1 (206 aa).

S37 carries the phosphoserine modification. U52 is an active-site residue. Position 52 (U52) is a non-standard amino acid, selenocysteine. An N6-acetyllysine; alternate mark is found at K91, K117, and K151. K91, K117, and K151 each carry N6-succinyllysine; alternate. Phosphoserine is present on residues S200 and S204.

The protein belongs to the glutathione peroxidase family. As to quaternary structure, homotetramer. Interacts with MIEN1. In terms of processing, during periods of oxidative stress, Sec-52 may react with a superoxide radical, irreversibly lose hydroselenide and be converted to dehydroalanine.

The protein localises to the cytoplasm. The protein resides in the mitochondrion. The enzyme catalyses 2 glutathione + H2O2 = glutathione disulfide + 2 H2O. It catalyses the reaction a hydroperoxy polyunsaturated fatty acid + 2 glutathione = a hydroxy polyunsaturated fatty acid + glutathione disulfide + H2O. It carries out the reaction tert-butyl hydroperoxide + 2 glutathione = tert-butanol + glutathione disulfide + H2O. The catalysed reaction is cumene hydroperoxide + 2 glutathione = 2-phenylpropan-2-ol + glutathione disulfide + H2O. The enzyme catalyses (13S)-hydroperoxy-(9Z,11E)-octadecadienoate + 2 glutathione = (13S)-hydroxy-(9Z,11E)-octadecadienoate + glutathione disulfide + H2O. It catalyses the reaction (9S)-hydroperoxy-(10E,12Z)-octadecadienoate + 2 glutathione = (9S)-hydroxy-(10E,12Z)-octadecadienoate + glutathione disulfide + H2O. It carries out the reaction (5S)-hydroperoxy-(6E,8Z,11Z,14Z)-eicosatetraenoate + 2 glutathione = (5S)-hydroxy-(6E,8Z,11Z,14Z)-eicosatetraenoate + glutathione disulfide + H2O. The catalysed reaction is (12S)-hydroperoxy-(5Z,8Z,10E,14Z)-eicosatetraenoate + 2 glutathione = (12S)-hydroxy-(5Z,8Z,10E,14Z)-eicosatetraenoate + glutathione disulfide + H2O. The enzyme catalyses (12R)-hydroperoxy-(5Z,8Z,10E,14Z)-eicosatetraenoate + 2 glutathione = (12R)-hydroxy-(5Z,8Z,10E,14Z)-eicosatetraenoate + glutathione disulfide + H2O. It catalyses the reaction (15S)-hydroperoxy-(5Z,8Z,11Z,13E)-eicosatetraenoate + 2 glutathione = (15S)-hydroxy-(5Z,8Z,11Z,13E)-eicosatetraenoate + glutathione disulfide + H2O. It carries out the reaction (5S)-hydroperoxy-(6E,8Z,11Z,14Z,17Z)-eicosapentaenoate + 2 glutathione = (5S)-hydroxy-(6E,8Z,11Z,14Z,17Z)-eicosapentaenoate + glutathione disulfide + H2O. The catalysed reaction is (12S)-hydroperoxy-(5Z,8Z,10E,14Z,17Z)-eicosapentaenoate + 2 glutathione = (12S)-hydroxy-(5Z,8Z,10E,14Z,17Z)-eicosapentaenoate + glutathione disulfide + H2O. The enzyme catalyses (15S)-hydroperoxy-(5Z,8Z,11Z,13E,17Z)-eicosapentaenoate + 2 glutathione = (15S)-hydroxy-(5Z,8Z,11Z,13E,17Z)-eicosapentaenoate + glutathione disulfide + H2O. It catalyses the reaction (15S)-hydroperoxy-(11Z,13E)-eicosadienoate + 2 glutathione = (15S)-hydroxy-(11Z,13E)-eicosadienoate + glutathione disulfide + H2O. It carries out the reaction (17S)-hydroperoxy-(4Z,7Z,10Z,13Z,15E,19Z)-docosahexaenoate + 2 glutathione = (17S)-hydroxy-(4Z,7Z,10Z,13Z,15E,19Z)-docosahexaenoate + glutathione disulfide + H2O. Its function is as follows. Catalyzes the reduction of hydroperoxides in a glutathione-dependent manner thus regulating cellular redox homeostasis. Can reduce small soluble hydroperoxides such as H2O2, cumene hydroperoxide and tert-butyl hydroperoxide, as well as several fatty acid-derived hydroperoxides. In platelets catalyzes the reduction of 12-hydroperoxyeicosatetraenoic acid, the primary product of the arachidonate 12-lipoxygenase pathway. The polypeptide is Glutathione peroxidase 1 (GPX1) (Sus scrofa (Pig)).